The chain runs to 213 residues: Large ribosomal subunit protein uL1 (213 aa).

This sequence belongs to the universal ribosomal protein uL1 family. As to quaternary structure, part of the 50S ribosomal subunit.

In terms of biological role, binds directly to 23S rRNA. Probably involved in E site tRNA release. Its function is as follows. Protein L1 is also a translational repressor protein, it controls the translation of its operon by binding to its mRNA. This Methanococcus maripaludis (strain C5 / ATCC BAA-1333) protein is Large ribosomal subunit protein uL1.